The sequence spans 570 residues: Sulfite reductase [NADPH] hemoprotein beta-component (570 aa).

[4Fe-4S] cluster contacts are provided by cysteine 433, cysteine 439, cysteine 478, and cysteine 482. Position 482 (cysteine 482) interacts with siroheme.

This sequence belongs to the nitrite and sulfite reductase 4Fe-4S domain family. In terms of assembly, alpha(8)-beta(8). The alpha component is a flavoprotein, the beta component is a hemoprotein. Requires siroheme as cofactor. The cofactor is [4Fe-4S] cluster.

The enzyme catalyses hydrogen sulfide + 3 NADP(+) + 3 H2O = sulfite + 3 NADPH + 4 H(+). It functions in the pathway sulfur metabolism; hydrogen sulfide biosynthesis; hydrogen sulfide from sulfite (NADPH route): step 1/1. Functionally, component of the sulfite reductase complex that catalyzes the 6-electron reduction of sulfite to sulfide. This is one of several activities required for the biosynthesis of L-cysteine from sulfate. This chain is Sulfite reductase [NADPH] hemoprotein beta-component, found in Aeromonas hydrophila subsp. hydrophila (strain ATCC 7966 / DSM 30187 / BCRC 13018 / CCUG 14551 / JCM 1027 / KCTC 2358 / NCIMB 9240 / NCTC 8049).